The primary structure comprises 735 residues: Receptor-type guanylate cyclase gcy-27 (735 aa).

A glycan (N-linked (GlcNAc...) asparagine) is linked at N11. A helical transmembrane segment spans residues F28–N48. The 278-residue stretch at A188–I465 folds into the Protein kinase domain. The 131-residue stretch at T538–Q668 folds into the Guanylate cyclase domain.

It belongs to the adenylyl cyclase class-4/guanylyl cyclase family. As to expression, expressed bilaterally in ASK, ASI and ASJ sensory neurons.

Its subcellular location is the cell membrane. The catalysed reaction is GTP = 3',5'-cyclic GMP + diphosphate. In terms of biological role, guanylate cyclase involved in the production of the second messenger cGMP. May be involved in sensitivity to quinine by regulating egl-4 activity through the production of cGMP. Promotes the calcium flux to the cytoplasm in ASJ sensory neurons upon removal of a nitric oxide (NO) stimulus and is thereby involved in the behavioral avoidance response to NO-producing organisms like P.aeruginosa. This is Receptor-type guanylate cyclase gcy-27 from Caenorhabditis elegans.